Here is a 163-residue protein sequence, read N- to C-terminus: Pheromone-binding protein (163 aa).

The N-terminal stretch at 1-22 is a signal peptide; it reads MMSVRLMLVVAVWLCLRVDASQ. Cystine bridges form between cysteine 39–cysteine 74, cysteine 70–cysteine 129, and cysteine 117–cysteine 138.

The protein belongs to the PBP/GOBP family. In terms of tissue distribution, antenna.

Functionally, this major soluble protein in olfactory sensilla of male moths might serve to solubilize the extremely hydrophobic pheromone molecules and to transport pheromone through the aqueous lymph to receptors located on olfactory cilia. This Heliothis virescens (Tobacco budworm moth) protein is Pheromone-binding protein.